A 567-amino-acid chain; its full sequence is Protein phosphatase 1 regulatory inhibitor subunit 16B (567 aa).

The stretch at 15 to 55 (EKVPTLERLRAAQKRRAQQLKKWAQYEQDLQHRKRKHERKR) forms a coiled coil. Phosphoserine is present on serine 69. ANK repeat units follow at residues 100–129 (DGLT…NVNA), 133–162 (ELWT…DLLA), 228–257 (QGAT…RVDV), and 261–290 (DGWE…SLSA). A phosphoserine mark is found at serine 333, serine 337, and serine 350. Residues 378-403 (RTSTYNGDIRETRTDQENKDPNPRLE) form a disordered region. Positions 385 to 403 (DIRETRTDQENKDPNPRLE) are enriched in basic and acidic residues. Serine 476 carries the phosphoserine modification. Residues 504-515 (SSMARTGESSSE) show a composition bias toward polar residues. Residues 504-525 (SSMARTGESSSEGKAPLIGGRT) form a disordered region. The ANK 5 repeat unit spans residues 530 to 559 (SNGTSVYYTVTSGDPPLLKFKAPIEEMEEK). A lipid anchor (S-palmitoyl cysteine) is attached at cysteine 563. Cysteine methyl ester is present on cysteine 564. Cysteine 564 is lipidated: S-farnesyl cysteine. The propeptide at 565 to 567 (RIS) is removed in mature form.

In terms of assembly, interacts with PPP1CA, PPP1CB and MSN. Interacts (via its fourth ankyrin repeat) with the mature dimeric form of RPSA/LAMR1. Interacts with EEF1A1. Interacts with PTEN. Interacts with ECE1. In terms of processing, phosphorylated by PKA and, after PKA priming, by GSK3B. Phosphorylation by GSK3B reduces its association with PP1C and enhances PP1C activity. Dephosphorylation by its associated PP1C results in enhanced association with PP1C, but reduced PP1C activity.

The protein resides in the cell membrane. It localises to the nucleus. The protein localises to the cell projection. Regulator of protein phosphatase 1 (PP1) that acts as a positive regulator of pulmonary endothelial cell (EC) barrier function. Involved in the regulation of the PI3K/AKT signaling pathway, angiogenesis and endothelial cell proliferation. Regulates angiogenesis and endothelial cell proliferation through the control of ECE1 dephosphorylation, trafficking and activity. Protects the endothelial barrier from lipopolysaccharide (LPS)-induced vascular leakage. Involved in the regulation of endothelial cell filopodia extension. May be a downstream target for TGF-beta1 signaling cascade in endothelial cells. Involved in PKA-mediated moesin dephosphorylation which is important in EC barrier protection against thrombin stimulation. Promotes the interaction of PPP1CA with RPSA/LAMR1 and in turn facilitates the dephosphorylation of RPSA/LAMR1. Involved in the dephosphorylation of EEF1A1. This chain is Protein phosphatase 1 regulatory inhibitor subunit 16B (PPP1R16B), found in Homo sapiens (Human).